The sequence spans 220 residues: UPF0319 protein CKO_02102 (220 aa).

An N-terminal signal peptide occupies residues 1–20; that stretch reads MKTGIITMLFVLYLPVTAFA.

Belongs to the UPF0319 family.

The sequence is that of UPF0319 protein CKO_02102 from Citrobacter koseri (strain ATCC BAA-895 / CDC 4225-83 / SGSC4696).